A 353-amino-acid chain; its full sequence is Photosystem II D2 protein (353 aa).

N-acetylthreonine is present on Thr2. Residue Thr2 is modified to Phosphothreonine. A helical membrane pass occupies residues 41-61 (CAYFALGGWFTGTTFVTSWYT). His118 lines the chlorophyll a pocket. Residues 125–141 (GFMLRQFELARSVQLRP) traverse the membrane as a helical segment. 2 residues coordinate pheophytin a: Gln130 and Asn143. The helical transmembrane segment at 153-166 (VFISVFFIYPLGQS) threads the bilayer. His198 contributes to the chlorophyll a binding site. The chain crosses the membrane as a helical span at residues 208 to 228 (AALLCAIHGATVENTLFEDGD). 2 residues coordinate a plastoquinone: His215 and Phe262. His215 contacts Fe cation. A Fe cation-binding site is contributed by His269. The helical transmembrane segment at 279–295 (GLWMSALGVVGLALNLR) threads the bilayer.

Belongs to the reaction center PufL/M/PsbA/D family. PSII is composed of 1 copy each of membrane proteins PsbA, PsbB, PsbC, PsbD, PsbE, PsbF, PsbH, PsbI, PsbJ, PsbK, PsbL, PsbM, PsbT, PsbX, PsbY, PsbZ, Psb30/Ycf12, at least 3 peripheral proteins of the oxygen-evolving complex and a large number of cofactors. It forms dimeric complexes. The cofactor is The D1/D2 heterodimer binds P680, chlorophylls that are the primary electron donor of PSII, and subsequent electron acceptors. It shares a non-heme iron and each subunit binds pheophytin, quinone, additional chlorophylls, carotenoids and lipids. There is also a Cl(-1) ion associated with D1 and D2, which is required for oxygen evolution. The PSII complex binds additional chlorophylls, carotenoids and specific lipids..

It localises to the plastid membrane. The enzyme catalyses 2 a plastoquinone + 4 hnu + 2 H2O = 2 a plastoquinol + O2. In terms of biological role, photosystem II (PSII) is a light-driven water:plastoquinone oxidoreductase that uses light energy to abstract electrons from H(2)O, generating O(2) and a proton gradient subsequently used for ATP formation. It consists of a core antenna complex that captures photons, and an electron transfer chain that converts photonic excitation into a charge separation. The D1/D2 (PsbA/PsbD) reaction center heterodimer binds P680, the primary electron donor of PSII as well as several subsequent electron acceptors. D2 is needed for assembly of a stable PSII complex. The polypeptide is Photosystem II D2 protein (Cuscuta reflexa (Southern Asian dodder)).